The sequence spans 453 residues: Phosphomannomutase (453 aa).

Serine 96 serves as the catalytic Phosphoserine intermediate. The Mg(2+) site is built by serine 96, aspartate 243, aspartate 245, and aspartate 247.

The protein belongs to the phosphohexose mutase family. The cofactor is Mg(2+).

It carries out the reaction alpha-D-mannose 1-phosphate = D-mannose 6-phosphate. Its pathway is nucleotide-sugar biosynthesis; GDP-alpha-D-mannose biosynthesis; alpha-D-mannose 1-phosphate from D-fructose 6-phosphate: step 2/2. It participates in bacterial outer membrane biogenesis; LPS O-antigen biosynthesis. Functionally, involved in GDP-mannose biosynthesis which serves as the activated sugar nucleotide precursor for mannose residues in cell surface polysaccharides. This enzyme participates in synthesis of the LPS O7 antigen. The sequence is that of Phosphomannomutase (manB) from Escherichia coli.